Reading from the N-terminus, the 505-residue chain is Maturase K (505 aa).

This sequence belongs to the intron maturase 2 family. MatK subfamily.

Its subcellular location is the plastid. It localises to the chloroplast. Its function is as follows. Usually encoded in the trnK tRNA gene intron. Probably assists in splicing its own and other chloroplast group II introns. This chain is Maturase K, found in Illicium oligandrum (Star anise).